Consider the following 26-residue polypeptide: Peroxidase 1 (26 aa).

Ca(2+) is bound at residue Asp15.

The protein belongs to the peroxidase family. Classical plant (class III) peroxidase subfamily. The cofactor is heme b. It depends on Ca(2+) as a cofactor.

The protein resides in the secreted. The enzyme catalyses 2 a phenolic donor + H2O2 = 2 a phenolic radical donor + 2 H2O. In terms of biological role, removal of H(2)O(2), oxidation of toxic reductants, biosynthesis and degradation of lignin, suberization, auxin catabolism, response to environmental stresses such as wounding, pathogen attack and oxidative stress. These functions might be dependent on each isozyme/isoform in each plant tissue. The chain is Peroxidase 1 from Vitis vinifera (Grape).